Consider the following 269-residue polypeptide: Protein shisa-1 (269 aa).

Positions 1–18 (MEFIVLLTVCALLGLSCG) are cleaved as a signal peptide. The Extracellular segment spans residues 19–98 (QHGEYCHGWT…LPPTVPTYFP (80 aa)). A helical membrane pass occupies residues 99–119 (FLLVGSIFVSFVILGSLVGLC). At 120–269 (CCKCLKPEDD…TVCSGSPSKC (150 aa)) the chain is on the cytoplasmic side. Residues 129–167 (DTQVSGPAPIQSRLLDQDPSTDTSRHSSSSSASMPRPPI) are disordered. Residues 146 to 162 (DPSTDTSRHSSSSSASM) are compositionally biased toward low complexity.

It belongs to the shisa family. As to quaternary structure, interacts with immature forms of fzd8 and fgfr.

It localises to the endoplasmic reticulum. It is found in the membrane. Its function is as follows. Required for head formation during gastrulation. Functions as an inhibitor for the caudalizing signals wnt and fgf, does not inhibit bmp, activin and nodal signaling in head formation process. Induces retention of fzd8 in the endoplasmic reticulum and inhibits trafficking of fzd8 to the cell surface. This Xenopus laevis (African clawed frog) protein is Protein shisa-1 (shisa1).